We begin with the raw amino-acid sequence, 232 residues long: Large ribosomal subunit protein uL1 (232 aa).

Belongs to the universal ribosomal protein uL1 family. Part of the 50S ribosomal subunit.

Its function is as follows. Binds directly to 23S rRNA. The L1 stalk is quite mobile in the ribosome, and is involved in E site tRNA release. Protein L1 is also a translational repressor protein, it controls the translation of the L11 operon by binding to its mRNA. The sequence is that of Large ribosomal subunit protein uL1 from Cereibacter sphaeroides (strain ATCC 17029 / ATH 2.4.9) (Rhodobacter sphaeroides).